A 328-amino-acid chain; its full sequence is D-cysteine desulfhydrase (328 aa).

Lysine 51 carries the post-translational modification N6-(pyridoxal phosphate)lysine.

It belongs to the ACC deaminase/D-cysteine desulfhydrase family. As to quaternary structure, homodimer. Pyridoxal 5'-phosphate is required as a cofactor.

It catalyses the reaction D-cysteine + H2O = hydrogen sulfide + pyruvate + NH4(+) + H(+). Its function is as follows. Catalyzes the alpha,beta-elimination reaction of D-cysteine and of several D-cysteine derivatives. It could be a defense mechanism against D-cysteine. In Klebsiella pneumoniae (strain 342), this protein is D-cysteine desulfhydrase.